Here is a 611-residue protein sequence, read N- to C-terminus: Alpha-1,2-mannosyltransferase ALG9 (611 aa).

Residues 1–10 are compositionally biased toward basic residues; the sequence is MASRRARQRL. The segment at 1–51 is disordered; the sequence is MASRRARQRLKGGGGGGGGGGDAGPAAEKLEQLGSREAGAEPRPESGNKAG. At 1-135 the chain is on the lumenal side; it reads MASRRARQRL…FHARILQTNK (135 aa). A compositionally biased stretch (gly residues) spans 11–23; the sequence is KGGGGGGGGGGDA. Residue Asn77 is glycosylated (N-linked (GlcNAc...) asparagine). Residues 136-156 form a helical membrane-spanning segment; it reads ILVFYFLRCLLAFVSCVCELY. Topologically, residues 157 to 171 are cytoplasmic; sequence FYKAVCKKFGLHVSR. The chain crosses the membrane as a helical span at residues 172–192; sequence MMLAFLVLSTGMFCSSSAFLP. Over 193–213 the chain is Lumenal; that stretch reads SSFCMYTTLIAMTGWYMDKTP. A helical membrane pass occupies residues 214–234; it reads IAVLGVAAGAILGWPFSAALG. Over 235-249 the chain is Cytoplasmic; that stretch reads LPIAFDLLARKHRWK. The chain crosses the membrane as a helical span at residues 250 to 270; that stretch reads SFLLWSLVALALFLVPVVVID. The Lumenal segment spans residues 271-310; the sequence is SYYYGKLVVAPLNIVLYNVFTSHGPDLYGTEPWYFYLING. A helical membrane pass occupies residues 311 to 331; that stretch reads FLNFNVAFALALLVLPLTFLM. Topologically, residues 332 to 342 are cytoplasmic; it reads EYLLQRFHVQN. A helical transmembrane segment spans residues 343-363; it reads LGHPYWLTLAPMYIWFIIFFI. Residues 364–370 are Lumenal-facing; that stretch reads QPHKEER. A helical membrane pass occupies residues 371–391; it reads FLFPVYPLICLCGAVALSALQ. The Cytoplasmic portion of the chain corresponds to 392–405; the sequence is KCYHFVFQRYRLEH. A helical transmembrane segment spans residues 406 to 426; that stretch reads YTVTSNWLALGTVFLFGLLSF. Over 427-611 the chain is Lumenal; sequence SRSVALFRGY…AKPSRKKSGG (185 aa). 2 N-linked (GlcNAc...) asparagine glycosylation sites follow: Asn550 and Asn593.

The protein belongs to the glycosyltransferase 22 family.

It is found in the endoplasmic reticulum membrane. It carries out the reaction an alpha-D-Man-(1-&gt;2)-alpha-D-Man-(1-&gt;2)-alpha-D-Man-(1-&gt;3)-[alpha-D-Man-(1-&gt;3)-alpha-D-Man-(1-&gt;6)]-beta-D-Man-(1-&gt;4)-beta-D-GlcNAc-(1-&gt;4)-alpha-D-GlcNAc-diphospho-di-trans,poly-cis-dolichol + a di-trans,poly-cis-dolichyl beta-D-mannosyl phosphate = an alpha-D-Man-(1-&gt;2)-alpha-D-Man-(1-&gt;2)-alpha-D-Man-(1-&gt;3)-[alpha-D-Man-(1-&gt;2)-alpha-D-Man-(1-&gt;3)-alpha-D-Man-(1-&gt;6)]-beta-D-Man-(1-&gt;4)-beta-D-GlcNAc-(1-&gt;4)-alpha-D-GlcNAc-diphospho-di-trans,poly-cis-dolichol + a di-trans,poly-cis-dolichyl phosphate + H(+). The enzyme catalyses an alpha-D-Man-(1-&gt;2)-alpha-D-Man-(1-&gt;2)-alpha-D-Man-(1-&gt;3)-[alpha-D-Man-(1-&gt;2)-alpha-D-Man-(1-&gt;3)-[alpha-D-Man-(1-&gt;6)]-alpha-D-Man-(1-&gt;6)]-beta-D-Man-(1-&gt;4)-beta-D-GlcNAc-(1-&gt;4)-alpha-D-GlcNAc-diphospho-di-trans,poly-cis-dolichol + a di-trans,poly-cis-dolichyl beta-D-mannosyl phosphate = an alpha-D-Man-(1-&gt;2)-alpha-D-Man-(1-&gt;2)-alpha-D-Man-(1-&gt;3)-[alpha-D-Man-(1-&gt;2)-alpha-D-Man-(1-&gt;3)-[alpha-D-Man-(1-&gt;2)-alpha-D-Man-(1-&gt;6)]-alpha-D-Man-(1-&gt;6)]-beta-D-Man-(1-&gt;4)-beta-D-GlcNAc-(1-&gt;4)-alpha-D-GlcNAc-diphospho-di-trans,poly-cis-dolichol + a di-trans,poly-cis-dolichyl phosphate + H(+). The protein operates within protein modification; protein glycosylation. Functionally, mannosyltransferase that operates in the biosynthetic pathway of dolichol-linked oligosaccharides, the glycan precursors employed in protein asparagine (N)-glycosylation. The assembly of dolichol-linked oligosaccharides begins on the cytosolic side of the endoplasmic reticulum membrane and finishes in its lumen. The sequential addition of sugars to dolichol pyrophosphate produces dolichol-linked oligosaccharides containing fourteen sugars, including two GlcNAcs, nine mannoses and three glucoses. Once assembled, the oligosaccharide is transferred from the lipid to nascent proteins by oligosaccharyltransferases. In the lumen of the endoplasmic reticulum, catalyzes the addition of the seventh and ninth alpha-1,2-linked mannose residues to Man(6)GlcNAc(2)-PP-dolichol and Man(8)GlcNAc(2)-PP-dolichol respectively. The protein is Alpha-1,2-mannosyltransferase ALG9 of Mus musculus (Mouse).